A 735-amino-acid chain; its full sequence is Lebercilin-like protein (735 aa).

2 disordered regions span residues 12–54 (TEAH…NGSV) and 91–115 (EKPL…RGQK). Low complexity predominate over residues 43 to 53 (QSQNSQASNGS). The stretch at 205–335 (TAKHQNEVKN…QQKLKEKDRE (131 aa)) forms a coiled coil. 4 disordered regions span residues 356–379 (YPKV…NMRH), 473–597 (SKEV…PRKH), 632–657 (KHRS…AGAR), and 685–735 (GRAG…KTVV). The span at 487-525 (TPRRPKENKEDQEKRAIPAEAEPTAKESEAHKDAEDKAL) shows a compositional bias: basic and acidic residues. The segment covering 528–541 (AAGNAGDAGDAGDA) has biased composition (low complexity). 3 stretches are compositionally biased toward basic and acidic residues: residues 542–553 (GNDREVVGEHKV), 573–588 (EVHG…EPGR), and 632–641 (KHRSEQELRL). Residues 689–707 (SSDSEAVSKSPQTGPQASA) show a composition bias toward polar residues.

The protein belongs to the LCA5 family.

In Mus musculus (Mouse), this protein is Lebercilin-like protein.